An 87-amino-acid chain; its full sequence is UPF0213 protein SYNAS_10430 (87 aa).

The GIY-YIG domain occupies serine 2–glutamine 78.

The protein belongs to the UPF0213 family.

This is UPF0213 protein SYNAS_10430 from Syntrophus aciditrophicus (strain SB).